Reading from the N-terminus, the 176-residue chain is Pectinesterase inhibitor 1 (176 aa).

The N-terminal stretch at 1-25 (MAANLRNNAFLSSLMFLLLIGSSYA) is a signal peptide. Intrachain disulfides connect cysteine 35–cysteine 44 and cysteine 98–cysteine 138. Asparagine 154 is a glycosylation site (N-linked (GlcNAc...) asparagine).

It belongs to the PMEI family. In terms of assembly, monomer and homodimer. Interacts in vitro with PPME1. Highest expression in flowers. Expressed exclusively at the pollen tube tip.

It localises to the secreted. The protein localises to the extracellular space. It is found in the apoplast. Inhibits pectin methylesterase (PME) from flowers and siliques. Inhibits PME from leaves. The polypeptide is Pectinesterase inhibitor 1 (Arabidopsis thaliana (Mouse-ear cress)).